Here is a 341-residue protein sequence, read N- to C-terminus: Anthranilate phosphoribosyltransferase (341 aa).

5-phospho-alpha-D-ribose 1-diphosphate is bound by residues glycine 82, 85–86, threonine 90, 92–95, 110–118, and threonine 122; these read GD, NIST, and KHGNRAITS. Glycine 82 contributes to the anthranilate binding site. Serine 94 provides a ligand contact to Mg(2+). Asparagine 113 provides a ligand contact to anthranilate. Arginine 168 is an anthranilate binding site. Positions 226 and 227 each coordinate Mg(2+).

This sequence belongs to the anthranilate phosphoribosyltransferase family. As to quaternary structure, homodimer. Mg(2+) is required as a cofactor.

The enzyme catalyses N-(5-phospho-beta-D-ribosyl)anthranilate + diphosphate = 5-phospho-alpha-D-ribose 1-diphosphate + anthranilate. Its pathway is amino-acid biosynthesis; L-tryptophan biosynthesis; L-tryptophan from chorismate: step 2/5. In terms of biological role, catalyzes the transfer of the phosphoribosyl group of 5-phosphorylribose-1-pyrophosphate (PRPP) to anthranilate to yield N-(5'-phosphoribosyl)-anthranilate (PRA). The protein is Anthranilate phosphoribosyltransferase of Caulobacter vibrioides (strain ATCC 19089 / CIP 103742 / CB 15) (Caulobacter crescentus).